The sequence spans 171 residues: uncharacterized protein (171 aa).

One can recognise an HTH marR-type domain in the interval 33-166 (AISIATNLYR…LTGLLRKVAD (134 aa)). A DNA-binding region (H-T-H motif) is located at residues 80 to 103 (TRKIAELSGISTATASNVIKTLEK).

This is an uncharacterized protein from Bacillus subtilis (strain 168).